Reading from the N-terminus, the 85-residue chain is U4-theraphotoxin-Hhn1s (85 aa).

The signal sequence occupies residues 1–22 (MKVTLIAILTCAAVLVLHTTAA). The propeptide occupies 23-48 (EELEAESQLMEVGMPDTELAAVDEER). 3 cysteine pairs are disulfide-bonded: Cys52-Cys66, Cys56-Cys77, and Cys71-Cys82.

The protein belongs to the neurotoxin 12 (Hwtx-2) family. 02 (Hwtx-2) subfamily. In terms of tissue distribution, expressed by the venom gland.

The protein resides in the secreted. In terms of biological role, postsynaptic neurotoxin. This chain is U4-theraphotoxin-Hhn1s, found in Cyriopagopus hainanus (Chinese bird spider).